We begin with the raw amino-acid sequence, 780 residues long: Striatin (780 aa).

Residues 53 to 120 (LHFLQHEWAR…QERAKYHKLK (68 aa)) adopt a coiled-coil conformation. The segment at 55–63 (FLQHEWARF) is caveolin-binding. The interval 123–150 (TELNQGDMKPPSYDSDEGNETEVQPQQN) is disordered. A Phosphoserine modification is found at S137. The segment at 149 to 166 (QNSQLMWKQGRQLLRQYL) is calmodulin-binding. T225 carries the phosphothreonine modification. Residues S227, S229, S245, and S259 each carry the phosphoserine modification. 3 disordered regions span residues 289 to 312 (DFLV…DWEK), 334 to 353 (EQYK…NRSK), and 364 to 392 (VDEL…ELSR). Residues 299-312 (NESRSAGDGTDWEK) are compositionally biased toward basic and acidic residues. Over residues 338-351 (KERKGKKGVKRPNR) the composition is skewed to basic residues. WD repeat units lie at residues 461 to 500 (SHFD…PAKK), 514 to 553 (AHKG…VDPY), 567 to 606 (GHTD…PALS), 662 to 701 (SSSC…LIHS), 704 to 743 (AHLE…CIQE), and 750 to 780 (KFEE…KVFV).

Belongs to the WD repeat striatin family. In terms of assembly, part of the core of STRIPAK complexes composed of PP2A catalytic and scaffolding subunits, the striatins (PP2A regulatory subunits), the striatin-associated proteins MOB4, STRIP1 and STRIP2, PDCD10 and members of the STE20 kinases, such as STK24 and STK26. Interacts with CTTNBP2; this interaction may regulate dendritic spine distribution of STRN. Activation of glutamate receptors weakens the interaction with CTTNBP2. Mainly expressed in brain but is also expressed at low levels in various tissues such as kidney, spleen, skeletal muscle and lung.

The protein localises to the cytoplasm. Its subcellular location is the membrane. It localises to the cell projection. The protein resides in the dendritic spine. Functionally, calmodulin-binding scaffolding protein which is the center of the striatin-interacting phosphatase and kinase (STRIPAK) complexes. STRIPAK complexes have critical roles in protein (de)phosphorylation and are regulators of multiple signaling pathways including Hippo, MAPK, nuclear receptor and cytoskeleton remodeling. Different types of STRIPAK complexes are involved in a variety of biological processes such as cell growth, differentiation, apoptosis, metabolism and immune regulation. This Mus musculus (Mouse) protein is Striatin (Strn).